Reading from the N-terminus, the 389-residue chain is Mannitol-1-phosphate 5-dehydrogenase (389 aa).

7 to 18 (AVHFGGGNIGRG) serves as a coordination point for NAD(+). The active site involves K216.

The protein belongs to the mannitol dehydrogenase family. Monomer.

It carries out the reaction D-mannitol 1-phosphate + NAD(+) = beta-D-fructose 6-phosphate + NADH + H(+). Functionally, catalyzes the NAD(H)-dependent interconversion of D-fructose 6-phosphate and D-mannitol 1-phosphate in the mannitol metabolic pathway. This Pyrenophora tritici-repentis (strain Pt-1C-BFP) (Wheat tan spot fungus) protein is Mannitol-1-phosphate 5-dehydrogenase.